Here is an 84-residue protein sequence, read N- to C-terminus: Putative defensin-like protein 139 (84 aa).

Residues 1–28 (MEPSNQIFFYLRRSKLLSGLGEIRMAKG) form the signal peptide. Intrachain disulfides connect Cys37-Cys81, Cys46-Cys65, Cys51-Cys75, and Cys55-Cys77.

Belongs to the DEFL family.

It is found in the secreted. In Arabidopsis thaliana (Mouse-ear cress), this protein is Putative defensin-like protein 139 (LCR7).